We begin with the raw amino-acid sequence, 583 residues long: 5-aminolevulinate synthase, erythroid-specific, mitochondrial (583 aa).

Position 158 (Arg-158) interacts with succinyl-CoA. Positions 253 and 254 each coordinate pyridoxal 5'-phosphate. Residues Ser-275 and Arg-294 each coordinate succinyl-CoA. Ser-327, His-355, and Thr-383 together coordinate pyridoxal 5'-phosphate. Residue Lys-386 is part of the active site. Lys-386 is modified (N6-(pyridoxal phosphate)lysine). Residues Thr-415 and Thr-416 each coordinate pyridoxal 5'-phosphate. Thr-503 serves as a coordination point for succinyl-CoA.

Belongs to the class-II pyridoxal-phosphate-dependent aminotransferase family. Homodimer. Pyridoxal 5'-phosphate serves as cofactor.

It is found in the mitochondrion inner membrane. It carries out the reaction succinyl-CoA + glycine + H(+) = 5-aminolevulinate + CO2 + CoA. It functions in the pathway porphyrin-containing compound metabolism; protoporphyrin-IX biosynthesis; 5-aminolevulinate from glycine: step 1/1. Catalyzes the pyridoxal 5'-phosphate (PLP)-dependent condensation of succinyl-CoA and glycine to form aminolevulinic acid (ALA), with CoA and CO2 as by-products. Contributes significantly to heme formation during erythropoiesis. In Danio rerio (Zebrafish), this protein is 5-aminolevulinate synthase, erythroid-specific, mitochondrial (alas2).